We begin with the raw amino-acid sequence, 717 residues long: P-loop NTPase domain-containing protein LPA1 homolog 2 (717 aa).

Disordered stretches follow at residues 235–259 (KKLK…SSTT) and 532–629 (HYSS…DTIS). 2 stretches are compositionally biased toward polar residues: residues 243-259 (VNSN…SSTT) and 532-545 (HYSS…TSDG). Residues 559-582 (SDEDDEEGDDDFHEPDSDEDLSDN) are compositionally biased toward acidic residues. Residues 583–602 (NDERNRDEIGSVDEESTKSD) are compositionally biased toward basic and acidic residues.

Its function is as follows. May be not required for the accumulation of phytic acid in seeds. Phytic acid is the primary storage form of phosphorus in cereal grains and other plant seeds. This is P-loop NTPase domain-containing protein LPA1 homolog 2 from Arabidopsis thaliana (Mouse-ear cress).